The primary structure comprises 86 residues: UPF0457 protein SAUSA300_2132 (86 aa).

This sequence belongs to the UPF0457 family.

In Staphylococcus aureus (strain USA300), this protein is UPF0457 protein SAUSA300_2132.